Consider the following 407-residue polypeptide: Methylthioribose kinase (407 aa).

ATP-binding positions include Asn-40, Lys-57, and 111–113 (EDL). Asp-229 is a substrate binding site. 246–248 (DAE) provides a ligand contact to ATP. Residue Arg-344 coordinates substrate.

The protein belongs to the methylthioribose kinase family. As to quaternary structure, homodimer.

The enzyme catalyses 5-(methylsulfanyl)-D-ribose + ATP = 5-(methylsulfanyl)-alpha-D-ribose 1-phosphate + ADP + H(+). It participates in amino-acid biosynthesis; L-methionine biosynthesis via salvage pathway; S-methyl-5-thio-alpha-D-ribose 1-phosphate from S-methyl-5'-thioadenosine (hydrolase route): step 2/2. Functionally, catalyzes the phosphorylation of methylthioribose into methylthioribose-1-phosphate. The sequence is that of Methylthioribose kinase from Yersinia pseudotuberculosis serotype O:3 (strain YPIII).